The following is an 82-amino-acid chain: MVAKEKIGTVVSDKMLNTRIVAVSDRVSHKNYGKVITRTKRYVAHDIESNSKIGDKVKIQETRPISKSKNWILVSILEKSST.

It belongs to the universal ribosomal protein uS17 family. Part of the 30S ribosomal subunit.

The protein localises to the plastid. It is found in the chloroplast. One of the primary rRNA binding proteins, it binds specifically to the 5'-end of 16S ribosomal RNA. This chain is Small ribosomal subunit protein uS17c (rps17), found in Emiliania huxleyi (Coccolithophore).